The sequence spans 1151 residues: Phospholipid-transporting ATPase NEO1 (1151 aa).

2 disordered regions span residues 1-21 (MPNP…NNNQ) and 73-95 (LDNF…THPL). The Extracellular segment spans residues 1–184 (MPNPPSFKSH…LSNAKYNAVT (184 aa)). Over residues 12 to 21 (QNLFNSNNNQ) the composition is skewed to polar residues. The segment at 51–104 (EPLSKHNTVGDRESFEMRTVDDLDNFSNHSSDSHRKSSNTDTHPLMYDNRLSQD) is required for endosome-to-Golgi sorting. At Ser-102 the chain carries Phosphoserine. Residues 185-205 (FVPTLLYEQFKFFYNLYFLVV) traverse the membrane as a helical segment. Residues 206 to 209 (ALSQ) lie on the Cytoplasmic side of the membrane. Residues 210-230 (AVPALRIGYLSSYIVPLAFVL) traverse the membrane as a helical segment. At 231–367 (TVTMAKEAID…TSNPLSVDNT (137 aa)) the chain is on the extracellular side. Residues 368-388 (LWANTVLASSGFCIACVVYTG) traverse the membrane as a helical segment. Residues 389–416 (RDTRQAMNTTTAKVKTGLLELEINSISK) are Cytoplasmic-facing. The helical transmembrane segment at 417–437 (ILCACVFALSILLVAFAGFHN) threads the bilayer. Asp-438 is a topological domain (extracellular). The helical transmembrane segment at 439 to 459 (DWYIDILRYLILFSTIIPVSL) threads the bilayer. Residues 460 to 947 (RVNLDLAKSV…KLAQFVMHRG (488 aa)) lie on the Cytoplasmic side of the membrane. Asp-503 (4-aspartylphosphate intermediate) is an active-site residue. ATP is bound by residues Asp-503, Lys-504, and Thr-505. Mg(2+) is bound at residue Asp-503. A Mg(2+)-binding site is contributed by Thr-505. Ser-551 carries the post-translational modification Phosphoserine. Glu-597, Phe-640, Ser-642, Lys-645, Lys-664, Arg-693, Thr-694, Thr-774, Gly-775, Asp-776, Arg-856, and Lys-862 together coordinate ATP. Mg(2+) is bound at residue Asp-882. 2 residues coordinate ATP: Asn-885 and Asp-886. Position 886 (Asp-886) interacts with Mg(2+). The chain crosses the membrane as a helical span at residues 948–968 (LIIAICQAVYSICSLFEPIAL). The Extracellular portion of the chain corresponds to 969 to 970 (YQ). Residues 971-991 (GWLMVGYATCYTMAPVFSLTL) traverse the membrane as a helical segment. Residues 992-1020 (DHDIEESLTKIYPELYKELTEGKSLSYKT) are Cytoplasmic-facing. The chain crosses the membrane as a helical span at residues 1021-1041 (FFVWVLLSLFQGSVIQLFSQA). Residues 1042 to 1052 (FTSLLDTDFTR) lie on the Extracellular side of the membrane. A helical membrane pass occupies residues 1053-1073 (MVAISFTALVVNELIMVALEI). Residues 1074–1078 (YTWNK) lie on the Cytoplasmic side of the membrane. The chain crosses the membrane as a helical span at residues 1079–1099 (TMLVTEIATLLFYIVSVPFLG). The Extracellular segment spans residues 1100–1109 (DYFDLGYMTT). The chain crosses the membrane as a helical span at residues 1110–1130 (VNYYAGLLVILLISIFPVWTA). The Cytoplasmic segment spans residues 1131–1151 (KAIYRRLHPPSYAKVQEFATP). Residues 1131-1151 (KAIYRRLHPPSYAKVQEFATP) form a required for endosomal targeting region.

This sequence belongs to the cation transport ATPase (P-type) (TC 3.A.3) family. Type IV subfamily. Interacts with MON2. Interacts with ANY1. Functions without a CDC50/LEM3 family accessory subunit. Mg(2+) is required as a cofactor.

The protein localises to the endosome membrane. It is found in the golgi apparatus membrane. The enzyme catalyses ATP + H2O + phospholipidSide 1 = ADP + phosphate + phospholipidSide 2.. The catalysed reaction is a 1,2-diacyl-sn-glycero-3-phospho-L-serine(out) + ATP + H2O = a 1,2-diacyl-sn-glycero-3-phospho-L-serine(in) + ADP + phosphate + H(+). It catalyses the reaction a 1,2-diacyl-sn-glycero-3-phosphoethanolamine(out) + ATP + H2O = a 1,2-diacyl-sn-glycero-3-phosphoethanolamine(in) + ADP + phosphate + H(+). Functionally, flippase that catalyzes the hydrolysis of ATP coupled to the transport of lysophosphatidylserine, phosphatidylethanolamine, and phosphatidylserine from the lumenal to the cytosolic leaflet of the Golgi apparatus membrane and ensures the maintenance of asymmetric distribution of phospholipids. Does not appear to transport phosphatidylcholine or sphingomyelin. May be involved in recycling from endosomes by driving the formation of SNX3-dependent recycling tubules. Required for COPI retrograde transport from the Golgi to the endoplasmic reticulum, Golgi-endosome trafficking, and Golgi-dependent protein glycosylation. The sequence is that of Phospholipid-transporting ATPase NEO1 from Saccharomyces cerevisiae (strain ATCC 204508 / S288c) (Baker's yeast).